The sequence spans 161 residues: Globin CTT-VIIB-4 (161 aa).

A signal peptide spans 1 to 16 (MKFFAVLALCIVGAIA). The Globin domain occupies 18 to 161 (PLTADEASLV…NTMAVAVAHL (144 aa)). Heme b is bound by residues His-76 and His-111.

The protein belongs to the globin family. As to quaternary structure, homodimer.

This chain is Globin CTT-VIIB-4 (CTT-7B4), found in Chironomus thummi thummi (Midge).